Reading from the N-terminus, the 400-residue chain is Pectinesterase B (400 aa).

2 residues coordinate substrate: threonine 171 and glutamine 205. The active-site Proton donor is the aspartate 228. The Nucleophile role is filled by aspartate 261. Residues arginine 325 and tryptophan 327 each coordinate substrate.

The protein belongs to the pectinesterase family.

The enzyme catalyses [(1-&gt;4)-alpha-D-galacturonosyl methyl ester](n) + n H2O = [(1-&gt;4)-alpha-D-galacturonosyl](n) + n methanol + n H(+). Its pathway is glycan metabolism; pectin degradation; 2-dehydro-3-deoxy-D-gluconate from pectin: step 1/5. This Pectobacterium parmentieri protein is Pectinesterase B (pemB).